The primary structure comprises 308 residues: 1D-myo-inositol 2-acetamido-2-deoxy-alpha-D-glucopyranoside deacetylase (308 aa).

Histidine 37, aspartate 40, and histidine 171 together coordinate Zn(2+).

This sequence belongs to the MshB deacetylase family. Zn(2+) is required as a cofactor.

The catalysed reaction is 1D-myo-inositol 2-acetamido-2-deoxy-alpha-D-glucopyranoside + H2O = 1D-myo-inositol 2-amino-2-deoxy-alpha-D-glucopyranoside + acetate. Its function is as follows. Catalyzes the deacetylation of 1D-myo-inositol 2-acetamido-2-deoxy-alpha-D-glucopyranoside (GlcNAc-Ins) in the mycothiol biosynthesis pathway. The sequence is that of 1D-myo-inositol 2-acetamido-2-deoxy-alpha-D-glucopyranoside deacetylase from Mycobacterium sp. (strain JLS).